Consider the following 272-residue polypeptide: MGGLDVVRAAHLHPSYELVDWKRVGQNKLVALVRSALVRVKFQDTTSSDSNNQDTSQNALSFDTQESQKALNGSQSGSSDTSGSNSQDFASYILIFQAAPRATWVFERKIKLALPYVKQESQGSDDQGSNGKGSLYTTLQDLLVEQPVTPYTPNAGLARVNGVAQDTVHFGSGQESSWNSQRSQKGLKTTPLPMPSPALSSIRAARTGSWMKVDRCMNPWIRPRRGRGRMRALGKIRKKQRRKMMPRWWGWLEVVRLEVLLVYKAMARTVRG.

2 disordered regions span residues 65–84 (QESQKALNGSQSGSSDTSGS) and 171–196 (GSGQESSWNSQRSQKGLKTTPLPMPS). Over residues 72–84 (NGSQSGSSDTSGS) the composition is skewed to low complexity. Residues 173–187 (GQESSWNSQRSQKGL) are compositionally biased toward polar residues.

It belongs to the MgpC family.

This Mycoplasma pneumoniae (strain ATCC 29342 / M129 / Subtype 1) (Mycoplasmoides pneumoniae) protein is Putative MgpC-like protein MPN_366.